A 540-amino-acid polypeptide reads, in one-letter code: tRNA-2-methylthio-N(6)-dimethylallyladenosine synthase (540 aa).

Residues 4 to 120 enclose the MTTase N-terminal domain; that stretch reads RSYEVRTFGC…LPVLLERARH (117 aa). Residues cysteine 13, cysteine 49, cysteine 83, cysteine 157, cysteine 161, and cysteine 164 each contribute to the [4Fe-4S] cluster site. In terms of domain architecture, Radical SAM core spans 143–374; sequence RASHHSAWVS…ALQDEISWAE (232 aa). One can recognise a TRAM domain in the interval 376–468; sequence RALVGRRVEV…PHHLTADGPL (93 aa). The segment at 480-540 is disordered; that stretch reads WALGRDGDGG…ADACCTPVRR (61 aa). 2 stretches are compositionally biased toward low complexity: residues 492-502 and 520-533; these read AAAQQPADGRP and GPAS…GADA.

Belongs to the methylthiotransferase family. MiaB subfamily. Monomer. It depends on [4Fe-4S] cluster as a cofactor.

Its subcellular location is the cytoplasm. The enzyme catalyses N(6)-dimethylallyladenosine(37) in tRNA + (sulfur carrier)-SH + AH2 + 2 S-adenosyl-L-methionine = 2-methylsulfanyl-N(6)-dimethylallyladenosine(37) in tRNA + (sulfur carrier)-H + 5'-deoxyadenosine + L-methionine + A + S-adenosyl-L-homocysteine + 2 H(+). Its function is as follows. Catalyzes the methylthiolation of N6-(dimethylallyl)adenosine (i(6)A), leading to the formation of 2-methylthio-N6-(dimethylallyl)adenosine (ms(2)i(6)A) at position 37 in tRNAs that read codons beginning with uridine. In Frankia casuarinae (strain DSM 45818 / CECT 9043 / HFP020203 / CcI3), this protein is tRNA-2-methylthio-N(6)-dimethylallyladenosine synthase.